The chain runs to 325 residues: tRNA uridine(34) hydroxylase (325 aa).

Residues Glu122–Trp218 enclose the Rhodanese domain. Residue Cys178 is the Cysteine persulfide intermediate of the active site.

This sequence belongs to the TrhO family.

The enzyme catalyses uridine(34) in tRNA + AH2 + O2 = 5-hydroxyuridine(34) in tRNA + A + H2O. Catalyzes oxygen-dependent 5-hydroxyuridine (ho5U) modification at position 34 in tRNAs. The protein is tRNA uridine(34) hydroxylase of Chlamydia felis (strain Fe/C-56) (Chlamydophila felis).